We begin with the raw amino-acid sequence, 387 residues long: Protein arginine N-methyltransferase 1 (387 aa).

A disordered region spans residues 1 to 60; the sequence is MDQRKGSGSDANGGLAEATASRLRFEDPDEVMEENPAAAAATVGAEEEGGEGGGGEEVIG. Over residues 34-44 the composition is skewed to low complexity; sequence ENPAAAAATVG. The 322-residue stretch at 66–387 folds into the SAM-dependent MTase PRMT-type domain; the sequence is ADYYFDSYSH…VSRTQHYKMR (322 aa). S-adenosyl-L-methionine is bound by residues His79, Arg88, Gly112, Glu134, and Glu163. Catalysis depends on residues Glu178 and Glu187.

This sequence belongs to the class I-like SAM-binding methyltransferase superfamily. Protein arginine N-methyltransferase family.

Its subcellular location is the nucleus. The enzyme catalyses L-arginyl-[protein] + S-adenosyl-L-methionine = N(omega)-methyl-L-arginyl-[protein] + S-adenosyl-L-homocysteine + H(+). It carries out the reaction L-arginyl-[protein] + 2 S-adenosyl-L-methionine = N(omega),N(omega)-dimethyl-L-arginyl-[protein] + 2 S-adenosyl-L-homocysteine + 2 H(+). Arginine methyltransferase that methylates (mono and asymmetric dimethylation) the guanidino nitrogens of arginyl residues present in target proteins. This is Protein arginine N-methyltransferase 1 (PRMT1) from Oryza sativa subsp. indica (Rice).